Reading from the N-terminus, the 146-residue chain is Hemoglobin subunit beta (146 aa).

Val-1 is modified (N-acetylvaline). Residues 2–146 (HLTGEEKAAV…VANALAHKYH (145 aa)) enclose the Globin domain. Phosphothreonine is present on Thr-12. A Phosphoserine modification is found at Ser-44. Lys-59 is modified (N6-acetyllysine). His-63 serves as a coordination point for heme b. Position 82 is an N6-acetyllysine (Lys-82). His-92 lines the heme b pocket. At Cys-93 the chain carries S-nitrosocysteine. Lys-144 carries the N6-acetyllysine modification.

This sequence belongs to the globin family. Heterotetramer of two alpha chains and two beta chains. Red blood cells.

Its function is as follows. Involved in oxygen transport from the lung to the various peripheral tissues. In Martes foina (Beech marten), this protein is Hemoglobin subunit beta (HBB).